Reading from the N-terminus, the 149-residue chain is UPF0260 protein PFL_1499 (149 aa).

Belongs to the UPF0260 family.

The sequence is that of UPF0260 protein PFL_1499 from Pseudomonas fluorescens (strain ATCC BAA-477 / NRRL B-23932 / Pf-5).